Reading from the N-terminus, the 355-residue chain is Elongation factor Ts (355 aa).

An involved in Mg(2+) ion dislocation from EF-Tu region spans residues threonine 82–valine 85.

Belongs to the EF-Ts family.

Its subcellular location is the cytoplasm. Functionally, associates with the EF-Tu.GDP complex and induces the exchange of GDP to GTP. It remains bound to the aminoacyl-tRNA.EF-Tu.GTP complex up to the GTP hydrolysis stage on the ribosome. The chain is Elongation factor Ts from Helicobacter pylori (strain G27).